The primary structure comprises 305 residues: Ribonuclease BN (305 aa).

Zn(2+) contacts are provided by H64, H66, D68, H69, H141, D212, and H270. Residue D68 is the Proton acceptor of the active site.

This sequence belongs to the RNase Z family. RNase BN subfamily. In terms of assembly, homodimer. Zn(2+) is required as a cofactor.

In terms of biological role, zinc phosphodiesterase, which has both exoribonuclease and endoribonuclease activities. This Escherichia coli O81 (strain ED1a) protein is Ribonuclease BN.